Here is a 390-residue protein sequence, read N- to C-terminus: GTPase Obg (390 aa).

In terms of domain architecture, Obg spans 1–159; sequence MKFVDEASIL…RELLLELMLL (159 aa). Positions 127-147 are disordered; sequence NTRFKSSVNRTPRQKTNGTPG. Residues 129–145 show a composition bias toward polar residues; that stretch reads RFKSSVNRTPRQKTNGT. Positions 160-333 constitute an OBG-type G domain; that stretch reads ADVGMLGMPN…LCWDVMTFII (174 aa). GTP contacts are provided by residues 166–173, 191–195, 213–216, 283–286, and 314–316; these read GMPNAGKS, FTTLV, DIPG, NKID, and SAA. S173 and T193 together coordinate Mg(2+).

The protein belongs to the TRAFAC class OBG-HflX-like GTPase superfamily. OBG GTPase family. As to quaternary structure, monomer. Mg(2+) is required as a cofactor.

The protein localises to the cytoplasm. Functionally, an essential GTPase which binds GTP, GDP and possibly (p)ppGpp with moderate affinity, with high nucleotide exchange rates and a fairly low GTP hydrolysis rate. Plays a role in control of the cell cycle, stress response, ribosome biogenesis and in those bacteria that undergo differentiation, in morphogenesis control. The chain is GTPase Obg from Shigella dysenteriae serotype 1 (strain Sd197).